We begin with the raw amino-acid sequence, 444 residues long: E1B 55 kDa protein (444 aa).

Positions Met-1 to Val-27 are disordered. A phosphoserine mark is found at Ser-438 and Ser-439.

The protein belongs to the adenoviridae E1B 55 kDa protein family. As to quaternary structure, interacts with host PML-4 and PML-5; this interaction promotes efficient subnuclear targeting of E1B-55K to PML nuclear bodies. Interacts with E4-ORF3 protein. Interacts with E4-ORF6 protein.

The protein localises to the host nucleus. It is found in the host cytoplasm. In terms of biological role, plays a major role to prevent cellular inhibition of viral genome replication. Assembles an SCF-like E3 ubiquitin ligase complex based on the cellular proteins ELOB, ELOC, CUL5 and RBX1, in cooperation with viral E4orf6. This viral RING-type ligase ubiquitinates cellular substrates and targets them to proteasomal degradation: TP53/p53, LIG4, MRE11-RAD50-NBS1 (MRN) complex, ITGA3, DAXX and BLM. E1B-55K probably acts as the substrate-specific adapter of the SCF-like E3 ubiquitin ligase complex. Degradation of host TP53/p53 activity is essential for preventing E1A-induced TP53 accumulation that would otherwise lead to cell apoptosis and growth arrest. E1B-55K also inactivates TP53 transcription-factor activity by binding its transactivation domain. E1B-55K also functions as a SUMO1 E3 ligase for TP53 which causes the latter to be sequestered in promyelocytic leukemia (PML) nuclear bodies thereby contributing to maximal inhibition of TP53 function. This chain is E1B 55 kDa protein, found in Canis lupus familiaris (Dog).